We begin with the raw amino-acid sequence, 312 residues long: Glyoxylate/hydroxypyruvate reductase A (312 aa).

Arg-227 is a catalytic residue. His-275 serves as the catalytic Proton donor.

It belongs to the D-isomer specific 2-hydroxyacid dehydrogenase family. GhrA subfamily.

The protein localises to the cytoplasm. It carries out the reaction glycolate + NADP(+) = glyoxylate + NADPH + H(+). The enzyme catalyses (R)-glycerate + NAD(+) = 3-hydroxypyruvate + NADH + H(+). It catalyses the reaction (R)-glycerate + NADP(+) = 3-hydroxypyruvate + NADPH + H(+). Its function is as follows. Catalyzes the NADPH-dependent reduction of glyoxylate and hydroxypyruvate into glycolate and glycerate, respectively. This chain is Glyoxylate/hydroxypyruvate reductase A, found in Salmonella paratyphi B (strain ATCC BAA-1250 / SPB7).